The following is a 255-amino-acid chain: Adenosylcobinamide-GDP ribazoletransferase (255 aa).

The next 7 membrane-spanning stretches (helical) occupy residues 33–53 (IFLP…IELF), 57–77 (FPGF…SGAL), 107–127 (VGSM…GSYA), 136–156 (FTVL…IYSF), 174–194 (AGLI…AAFF), 196–216 (FSLI…FVVA), and 234–254 (IMEL…NIGV).

The protein belongs to the CobS family. Mg(2+) serves as cofactor.

Its subcellular location is the cell membrane. It catalyses the reaction alpha-ribazole + adenosylcob(III)inamide-GDP = adenosylcob(III)alamin + GMP + H(+). It carries out the reaction alpha-ribazole 5'-phosphate + adenosylcob(III)inamide-GDP = adenosylcob(III)alamin 5'-phosphate + GMP + H(+). It participates in cofactor biosynthesis; adenosylcobalamin biosynthesis; adenosylcobalamin from cob(II)yrinate a,c-diamide: step 7/7. In terms of biological role, joins adenosylcobinamide-GDP and alpha-ribazole to generate adenosylcobalamin (Ado-cobalamin). Also synthesizes adenosylcobalamin 5'-phosphate from adenosylcobinamide-GDP and alpha-ribazole 5'-phosphate. This Carboxydothermus hydrogenoformans (strain ATCC BAA-161 / DSM 6008 / Z-2901) protein is Adenosylcobinamide-GDP ribazoletransferase.